Here is a 376-residue protein sequence, read N- to C-terminus: Alpha-ketoglutarate-dependent dioxygenase esdpJ (376 aa).

Fe cation contacts are provided by His145 and Asp147. Residue Thr202 coordinates 2-oxoglutarate. The disordered stretch occupies residues 234–260 (YNQSSQEKKSEIHVEPRGSPNNVGSDL). Basic and acidic residues predominate over residues 239–249 (QEKKSEIHVEP). A Fe cation-binding site is contributed by His335. Residues Arg347 and Arg351 each coordinate 2-oxoglutarate. A disordered region spans residues 354 to 376 (GVGEQPYLDPESKTRREALGEFN). A compositionally biased stretch (basic and acidic residues) spans 363–376 (PESKTRREALGEFN).

Belongs to the TfdA dioxygenase family. Fe(2+) is required as a cofactor.

In terms of biological role, alpha-ketoglutarate-dependent dioxygenas; part of the cluster that mediates the biosynthesis of shearones, diterpenoid pyrones (DPs) which are structurally diverse meroterpenoids consisting of a diterpene linked by a pyrone, and which may exhibit a range of bioactivities. The alpha-ketoglutarate-dependent dioxygenase esdpJ seems not to be involved in this pathway. The molecular scaffold is commonly biosynthesized by a series of enzymes including the non-reducing polyketide synthase (NR-PKS) esdpA that generates an alpha-pyrone; the prenyltransferase esdpC that attaches a geranylgeranyl pyrophosphate (GGPP) produced by the GGPP synthase (GGPPS) esdpD onto the pyrone unit; the FAD-dependent monooxygenase esdpE that converts an olefin on the diterpene unit into an epoxide; and the terpene cyclase esdpB that catalyzes the cyclization reactions to give the molecular backbone shearone A. In the modification steps, esdpF oxidizes the hydroxy group to a ketone at C-3 and esdpG then attaches hydroxy groups at both C-11 and C-12. After that, esdpI hydroxylates at C-20 and esdpH hydroxylates at C-6'. The ether bridge is generated by nucleophilic attack of the hydroxy group at C-20 to the carbonyl carbon at C-3. EsdpH can also functions prior to esdpI. The different combinations of these modification enzymes lead to the production of diverse shearone derivatives, shearone I being the end product of the pathway. In Penicillium shearii (Eupenicillium shearii), this protein is Alpha-ketoglutarate-dependent dioxygenase esdpJ.